We begin with the raw amino-acid sequence, 181 residues long: TATA-box-binding protein (181 aa).

Tandem repeats lie at residues 7 to 83 and 98 to 173.

This sequence belongs to the TBP family.

Its function is as follows. General factor that plays a role in the activation of archaeal genes transcribed by RNA polymerase. Binds specifically to the TATA box promoter element which lies close to the position of transcription initiation. The polypeptide is TATA-box-binding protein (Methanococcus maripaludis (strain C7 / ATCC BAA-1331)).